A 295-amino-acid chain; its full sequence is Nucleotide-binding protein EF_0766 (295 aa).

ATP is bound at residue 12 to 19 (GMSGAGKT). 62–65 (DLRS) is a binding site for GTP.

The protein belongs to the RapZ-like family.

Displays ATPase and GTPase activities. The polypeptide is Nucleotide-binding protein EF_0766 (Enterococcus faecalis (strain ATCC 700802 / V583)).